We begin with the raw amino-acid sequence, 621 residues long: SH2B adapter protein 2 (621 aa).

Position 47 is a phosphotyrosine (Tyr-47). Ser-130 bears the Phosphoserine mark. The disordered stretch occupies residues 143–166 (RRSSPEPDGGATPKAAEPASEPRD). One can recognise a PH domain in the interval 186-299 (DIQREGALRF…WVADIQGCVD (114 aa)). Ser-303 carries the phosphoserine modification. Positions 409 to 507 (WFHGTLSRVK…SADITLRSYV (99 aa)) constitute an SH2 domain. Disordered stretches follow at residues 507–528 (VRAQ…PVPA) and 549–611 (PASP…LGRA). The span at 552-571 (PSNGAGASSSSGSSSSATSL) shows a compositional bias: low complexity. Residue Ser-597 is modified to Phosphoserine. At Tyr-618 the chain carries Phosphotyrosine.

It belongs to the SH2B adapter family. In terms of assembly, homodimer. Interacts with KIT/c-KIT, SHC1, EPOR, PDGFR, VAV1 and VAV3. Interacts (via N-terminal region) with SHC1. Interacts (via the phosphorylated C-terminus) with GRB2. Interacts (via its SH2 domain) with EPOR, INSR and KIT. Interacts with GRB2 after B-cell antigen receptor stimulation. Interacts (via PH domain) with VAV3. Interacts with NTRK1, NTRK2 and NTRK3 (phosphorylated); after stimulation of the receptor by its extracellular ligand and subsequent autophosphorylation of the receptor. Binds INSR, GRB2, ASB6 and CAP. Insulin stimulation leads to dissociation of CAP. Binds CBS only when SH2B2/APS has become phosphorylated. INSR binding does not depend on the phosphorylation of SH2B2/APS. Tyrosine phosphorylated by JAK2, KIT and other kinases activated by B-cell receptor in response to stimulation with cytokines, IL3, IL5, PDGF, IGF1, IGF2, CSF2/GM-CSF and cross-linking of the B-cell receptor complex. In terms of tissue distribution, strongly expressed in brain; also expressed in spleen, kidney and skeletal muscle, and at low levels in small intestine and bone marrow. Strongly expressed in B-cell lines, but not T-cell lines. Also expressed in myeloid and fibroblast cell lines.

The protein resides in the cytoplasm. The protein localises to the cell membrane. Adapter protein for several members of the tyrosine kinase receptor family. Involved in multiple signaling pathways. May be involved in coupling from immunoreceptor to Ras signaling. Acts as a negative regulator of cytokine signaling in collaboration with CBL. Binds to EPOR and suppresses EPO-induced STAT5 activation, possibly through a masking effect on STAT5 docking sites in EPOR. Suppresses PDGF-induced mitogenesis. May induce cytoskeletal reorganization via interaction with VAV3. The protein is SH2B adapter protein 2 (Sh2b2) of Mus musculus (Mouse).